The sequence spans 404 residues: Phospho-N-acetylmuramoyl-pentapeptide-transferase (404 aa).

10 consecutive transmembrane segments (helical) span residues 30–50 (SAAI…IIFF), 73–93 (IPTM…LLFA), 100–120 (IMLL…DDYI), 132–152 (GKFK…TLIF), 209–229 (YMWI…SNGA), 242–262 (TSAI…NVIF), 274–294 (LAEL…FLWY), 301–321 (IFMG…LAIV), 326–346 (LMIP…IIQV), and 381–401 (KIVT…LVTL).

It belongs to the glycosyltransferase 4 family. MraY subfamily. The cofactor is Mg(2+).

It is found in the cell inner membrane. The enzyme catalyses UDP-N-acetyl-alpha-D-muramoyl-L-alanyl-gamma-D-glutamyl-meso-2,6-diaminopimeloyl-D-alanyl-D-alanine + di-trans,octa-cis-undecaprenyl phosphate = di-trans,octa-cis-undecaprenyl diphospho-N-acetyl-alpha-D-muramoyl-L-alanyl-D-glutamyl-meso-2,6-diaminopimeloyl-D-alanyl-D-alanine + UMP. The protein operates within cell wall biogenesis; peptidoglycan biosynthesis. Functionally, catalyzes the initial step of the lipid cycle reactions in the biosynthesis of the cell wall peptidoglycan: transfers peptidoglycan precursor phospho-MurNAc-pentapeptide from UDP-MurNAc-pentapeptide onto the lipid carrier undecaprenyl phosphate, yielding undecaprenyl-pyrophosphoryl-MurNAc-pentapeptide, known as lipid I. This Amoebophilus asiaticus (strain 5a2) protein is Phospho-N-acetylmuramoyl-pentapeptide-transferase.